Consider the following 197-residue polypeptide: MAVSPKINRREHILQCLATMLETNPGQRITTAKLAAEVGVSEAALYRHFPSKARMFEGLIDFIEESLLSRINLIMTEEKDTMKRCQLLLQLLLIFSERNPGISRVLNGDALLGENERLRSRVSLIFSKIETHLKQILREKTLREGKGFNLDEAILANLLLAIAEGRIAQFVRSEFKQKPTEHFDQQWIFIQQQLLQS.

The HTH tetR-type domain maps to 7-67; sequence INRREHILQC…GLIDFIEESL (61 aa). The H-T-H motif DNA-binding region spans 30–49; that stretch reads TTAKLAAEVGVSEAALYRHF.

Belongs to the nucleoid occlusion factor SlmA family. Homodimer. Interacts with FtsZ.

It localises to the cytoplasm. Its subcellular location is the nucleoid. Functionally, required for nucleoid occlusion (NO) phenomenon, which prevents Z-ring formation and cell division over the nucleoid. Acts as a DNA-associated cell division inhibitor that binds simultaneously chromosomal DNA and FtsZ, and disrupts the assembly of FtsZ polymers. SlmA-DNA-binding sequences (SBS) are dispersed on non-Ter regions of the chromosome, preventing FtsZ polymerization at these regions. The polypeptide is Nucleoid occlusion factor SlmA (Shewanella sediminis (strain HAW-EB3)).